A 360-amino-acid polypeptide reads, in one-letter code: DNA polymerase IV (360 aa).

Positions 8 to 189 (IIHVDMDCFF…LPLEKIPGVG (182 aa)) constitute a UmuC domain. Mg(2+) is bound by residues D12 and D107. The active site involves E108.

The protein belongs to the DNA polymerase type-Y family. As to quaternary structure, monomer. It depends on Mg(2+) as a cofactor.

The protein localises to the cytoplasm. It carries out the reaction DNA(n) + a 2'-deoxyribonucleoside 5'-triphosphate = DNA(n+1) + diphosphate. Poorly processive, error-prone DNA polymerase involved in untargeted mutagenesis. Copies undamaged DNA at stalled replication forks, which arise in vivo from mismatched or misaligned primer ends. These misaligned primers can be extended by PolIV. Exhibits no 3'-5' exonuclease (proofreading) activity. May be involved in translesional synthesis, in conjunction with the beta clamp from PolIII. This is DNA polymerase IV from Vibrio cholerae serotype O1 (strain ATCC 39315 / El Tor Inaba N16961).